The primary structure comprises 149 residues: Putative oligosaccharyltransferase complex subunit CG9662 (149 aa).

Residues 1-32 (MIETLYNLPFHILVPPNIKVRRFSIPMPSPMA) lie on the Cytoplasmic side of the membrane. Residues 33-53 (VFSVILFSYFLVTGGIIYDVI) form a helical membrane-spanning segment. At 54 to 83 (VEPPSLGATVDEHGHSRPVAFMPYRVNGQY) the chain is on the extracellular side. The helical transmembrane segment at 84 to 104 (IMEGLASSFLFTVGGLGFIIM) threads the bilayer. Residues 105–117 (DQTHTPGKTNLNR) lie on the Cytoplasmic side of the membrane. A helical membrane pass occupies residues 118-138 (LLLTAMGFIFILVSFFTTWLF). Topologically, residues 139–149 (MRMKLPSYLQP) are extracellular.

It belongs to the OSTC family. Component of the oligosaccharyltransferase (OST) complex.

The protein localises to the membrane. Its function is as follows. Subunit of the oligosaccharyl transferase (OST) complex that catalyzes the initial transfer of a defined glycan (Glc(3)Man(9)GlcNAc(2) in eukaryotes) from the lipid carrier dolichol-pyrophosphate to an asparagine residue within an Asn-X-Ser/Thr consensus motif in nascent polypeptide chains, the first step in protein N-glycosylation. N-glycosylation occurs cotranslationally and the complex associates with the Sec61 complex at the channel-forming translocon complex that mediates protein translocation across the endoplasmic reticulum (ER). All subunits are required for a maximal enzyme activity. This chain is Putative oligosaccharyltransferase complex subunit CG9662, found in Drosophila melanogaster (Fruit fly).